Consider the following 372-residue polypeptide: Glutamate 5-kinase (372 aa).

ATP is bound at residue lysine 14. The substrate site is built by serine 54, aspartate 141, and asparagine 153. ATP-binding positions include 173–174 and 215–221; these read TD and TGGMATK. The region spanning 280–358 is the PUA domain; it reads RGQVVLDTGA…DNIEEILGYD (79 aa).

The protein belongs to the glutamate 5-kinase family.

It localises to the cytoplasm. It catalyses the reaction L-glutamate + ATP = L-glutamyl 5-phosphate + ADP. The protein operates within amino-acid biosynthesis; L-proline biosynthesis; L-glutamate 5-semialdehyde from L-glutamate: step 1/2. In terms of biological role, catalyzes the transfer of a phosphate group to glutamate to form L-glutamate 5-phosphate. The polypeptide is Glutamate 5-kinase (Shewanella halifaxensis (strain HAW-EB4)).